The chain runs to 198 residues: Recombination protein RecR (198 aa).

The segment at 57–72 adopts a C4-type zinc-finger fold; the sequence is CRQCRTLSEEELCPQC. Residues 80-174 form the Toprim domain; sequence SLLCVVEGPL…TLSRIAHGVP (95 aa).

It belongs to the RecR family.

Functionally, may play a role in DNA repair. It seems to be involved in an RecBC-independent recombinational process of DNA repair. It may act with RecF and RecO. The polypeptide is Recombination protein RecR (Pseudomonas paraeruginosa (strain DSM 24068 / PA7) (Pseudomonas aeruginosa (strain PA7))).